Here is a 270-residue protein sequence, read N- to C-terminus: Phosphatidylglycerol--prolipoprotein diacylglyceryl transferase (270 aa).

The next 4 membrane-spanning stretches (helical) occupy residues 19–39, 54–74, 92–112, and 116–136; these read FPVY…LWLA, IDLV…YYVI, QGGL…ILFA, and GLSF…GQAI. R138 contacts a 1,2-diacyl-sn-glycero-3-phospho-(1'-sn-glycerol). Helical transmembrane passes span 178-198, 206-226, and 236-256; these read HPTF…LLAL, GELF…VEGL, and LRIA…FIIV.

Belongs to the Lgt family.

The protein localises to the cell membrane. It carries out the reaction L-cysteinyl-[prolipoprotein] + a 1,2-diacyl-sn-glycero-3-phospho-(1'-sn-glycerol) = an S-1,2-diacyl-sn-glyceryl-L-cysteinyl-[prolipoprotein] + sn-glycerol 1-phosphate + H(+). It functions in the pathway protein modification; lipoprotein biosynthesis (diacylglyceryl transfer). Its function is as follows. Catalyzes the transfer of the diacylglyceryl group from phosphatidylglycerol to the sulfhydryl group of the N-terminal cysteine of a prolipoprotein, the first step in the formation of mature lipoproteins. The polypeptide is Phosphatidylglycerol--prolipoprotein diacylglyceryl transferase (Bacillus mycoides (strain KBAB4) (Bacillus weihenstephanensis)).